The following is a 782-amino-acid chain: Calcium-independent phospholipase A2-gamma (782 aa).

Asn-4 carries N-linked (GlcNAc...) asparagine glycosylation. Disordered stretches follow at residues 219-275 and 317-343; these read EKMS…PSAI and SKSQSEEQEEPAKTDQAVSKDRNAEEK. The segment covering 220 to 248 has biased composition (basic and acidic residues); sequence KMSQQKENEHFRDKSELEDKKVEEGKLRS. Asn-361 is a glycosylation site (N-linked (GlcNAc...) asparagine). The PNPLA domain maps to 445-640; it reads LSIDGGGTRG…LLNNPSALAM (196 aa). Positions 449–454 match the GXGXXG motif; sequence GGGTRG. A helical transmembrane segment spans residues 475-495; that stretch reads LFDYICGVSTGAILAFMLGLF. The GXSXG motif lies at 481–485; that stretch reads GVSTG. The active-site Nucleophile is the Ser-483. Asp-627 acts as the Proton acceptor in catalysis. The short motif at 627–629 is the DGA/G element; the sequence is DGG. An N6-succinyllysine modification is found at Lys-736.

As to expression, expressed in parenchymal tissues including heart, skeletal muscle, placenta, brain, liver and pancreas. Also expressed in bronchial epithelial cells and kidney. Highest expression is observed in skeletal muscle and heart.

The protein localises to the endoplasmic reticulum membrane. It localises to the mitochondrion membrane. It is found in the peroxisome membrane. It carries out the reaction a 1,2-diacyl-sn-glycero-3-phosphocholine + H2O = a 1-acyl-sn-glycero-3-phosphocholine + a fatty acid + H(+). The catalysed reaction is a 1,2-diacyl-sn-glycero-3-phosphocholine + H2O = a 2-acyl-sn-glycero-3-phosphocholine + a fatty acid + H(+). The enzyme catalyses a 1,2-diacyl-sn-glycero-3-phosphoethanolamine + H2O = a 1-acyl-sn-glycero-3-phosphoethanolamine + a fatty acid + H(+). It catalyses the reaction a 1-O-(1Z-alkenyl)-2-acyl-sn-glycero-3-phosphocholine + H2O = a 1-O-(1Z-alkenyl)-sn-glycero-3-phosphocholine + a fatty acid + H(+). It carries out the reaction a 1-acyl-sn-glycero-3-phosphocholine + H2O = sn-glycerol 3-phosphocholine + a fatty acid + H(+). The catalysed reaction is 1-acyl-2-(9Z,12Z)-octadecadienoyl-sn-glycero-3-phosphocholine + H2O = a 1-acyl-sn-glycero-3-phosphocholine + (9Z,12Z)-octadecadienoate + H(+). The enzyme catalyses 1-acyl-2-(5Z,8Z,11Z,14Z-eicosatetraenoyl)-sn-glycero-3-phosphocholine + H2O = a 1-acyl-sn-glycero-3-phosphocholine + (5Z,8Z,11Z,14Z)-eicosatetraenoate + H(+). It catalyses the reaction 1-hexadecanoyl-2-(5Z,8Z,11Z,14Z-eicosatetraenoyl)-sn-glycero-3-phosphocholine + H2O = 1-hexadecanoyl-sn-glycero-3-phosphocholine + (5Z,8Z,11Z,14Z)-eicosatetraenoate + H(+). It carries out the reaction 1-octadecanoyl-2-(9Z-octadecenoyl)-sn-glycero-3-phosphocholine + H2O = 1-octadecanoyl-sn-glycero-3-phosphocholine + (9Z)-octadecenoate + H(+). The catalysed reaction is 1-hexadecanoyl-2-(9Z-octadecenoyl)-sn-glycero-3-phosphocholine + H2O = 1-hexadecanoyl-sn-glycero-3-phosphocholine + (9Z)-octadecenoate + H(+). The enzyme catalyses 1-hexadecanoyl-2-(9Z,12Z-octadecadienoyl)-sn-glycero-3-phosphocholine + H2O = (9Z,12Z)-octadecadienoate + 1-hexadecanoyl-sn-glycero-3-phosphocholine + H(+). It catalyses the reaction 1-acyl-2-(9Z,12Z)-octadecadienoyl-sn-glycero-3-phosphoethanolamine + H2O = a 1-acyl-sn-glycero-3-phosphoethanolamine + (9Z,12Z)-octadecadienoate + H(+). It carries out the reaction 1-acyl-2-(5Z,8Z,11Z,14Z)-eicosatetraenoyl-sn-glycero-3-phosphoethanolamine + H2O = a 1-acyl-sn-glycero-3-phosphoethanolamine + (5Z,8Z,11Z,14Z)-eicosatetraenoate + H(+). The catalysed reaction is 1-hexadecanoyl-2-(5Z,8Z,11Z,14Z-eicosatetraenoyl)-sn-glycero-3-phosphoethanolamine + H2O = 1-hexadecanoyl-sn-glycero-3-phosphoethanolamine + (5Z,8Z,11Z,14Z)-eicosatetraenoate + H(+). The enzyme catalyses 1-hexadecanoyl-2-(5Z,8Z,11Z,14Z-eicosatetraenoyl)-sn-glycero-3-phosphocholine + H2O = 2-(5Z,8Z,11Z,14Z)-eicosatetraenoyl-sn-glycero-3-phosphocholine + hexadecanoate + H(+). It catalyses the reaction 1-octadecanoyl-2-(9Z-octadecenoyl)-sn-glycero-3-phosphocholine + H2O = 2-(9Z-octadecenoyl)-sn-glycero-3-phosphocholine + octadecanoate + H(+). It carries out the reaction 1-hexadecanoyl-2-(4Z,7Z,10Z,13Z,16Z,19Z-docosahexaenoyl)-sn-glycero-3-phosphocholine + H2O = 2-(4Z,7Z,10Z,13Z,16Z,19Z-docosahexaenoyl)-sn-glycero-3-phosphocholine + hexadecanoate + H(+). The catalysed reaction is 1-O-(1Z)-hexadecenyl-2 (5Z,8Z,11Z,14Z)-eicosatetraenoyl-sn-glycero-3-phosphocholine + H2O = 1-(1Z-hexadecenyl)-sn-glycero-3-phosphocholine + (5Z,8Z,11Z,14Z)-eicosatetraenoate + H(+). The enzyme catalyses 1-O-(1Z-hexadecenyl)-2-(9Z-octadecenoyl)-sn-glycero-3-phosphocholine + H2O = 1-(1Z-hexadecenyl)-sn-glycero-3-phosphocholine + (9Z)-octadecenoate + H(+). It catalyses the reaction 1-hexadecanoyl-sn-glycero-3-phosphocholine + H2O = sn-glycerol 3-phosphocholine + hexadecanoate + H(+). It carries out the reaction 1',3'-bis-[1,2-di-(9Z,12Z-octadecadienoyl)-sn-glycero-3-phospho]-glycerol + H2O = 1'-[1,2-di-(9Z,12Z-octadecadienoyl)-sn-glycero-3-phospho]-3'-[1-(9Z,12Z-octadecadienoyl)-sn-glycero-3-phospho]-glycerol + (9Z,12Z)-octadecadienoate + H(+). The catalysed reaction is 1'-[1-acyl-2-(9-hydroxy-(10E,12Z)-octadecadienoyl)-sn-glycero-3-phospho]-3'-[1,2-diacyl-sn-glycero-3-phospho]-glycerol + H2O = 9-hydroxy-(10E,12Z)-octadecadienoate + 1'-[1,2-diacyl-sn-glycero-3-phospho],3'-[1-acyl-sn-glycero-3-phospho]-glycerol + H(+). It participates in phospholipid metabolism. Its activity is regulated as follows. Calcium-independent phospholipase. Inhibited by (E)-6-bromomethylene-3-1-naphthalenyl-2H-tetrahydropyran-2-one (BEL). The activity toward 1-hexadecanoyl-2-(5Z,8Z,11Z,14Z-eicosatetraenoyl)-sn-glycero-3-phosphocholine is stimulated by cardiolipin. Functionally, calcium-independent and membrane-bound phospholipase, that catalyzes the esterolytic cleavage of fatty acids from glycerophospholipids to yield free fatty acids and lysophospholipids, hence regulating membrane physical properties and the release of lipid second messengers and growth factors. Hydrolyzes phosphatidylethanolamine, phosphatidylcholine and probably phosphatidylinositol with a possible preference for the former. Also has a broad substrate specificity in terms of fatty acid moieties, hydrolyzing saturated and mono-unsaturated fatty acids at nearly equal rates from either the sn-1 or sn-2 position in diacyl phosphatidylcholine. However, has a weak activity toward polyunsaturated fatty acids at the sn-2 position, and thereby favors the production of 2-arachidonoyl lysophosphatidylcholine, a key branch point metabolite in eicosanoid signaling. On the other hand, can produce arachidonic acid from the sn-1 position of diacyl phospholipid and from the sn-2 position of arachidonate-containing plasmalogen substrates. Therefore, plays an important role in the mobilization of arachidonic acid in response to cellular stimuli and the generation of lipid second messengers. Can also hydrolyze lysophosphatidylcholine. In the mitochondrial compartment, catalyzes the hydrolysis and release of oxidized aliphatic chains from cardiolipin and integrates mitochondrial bioenergetics and signaling. It is essential for maintaining efficient bioenergetic mitochondrial function through tailoring mitochondrial membrane lipid metabolism and composition. The protein is Calcium-independent phospholipase A2-gamma of Homo sapiens (Human).